Reading from the N-terminus, the 305-residue chain is tRNA-cytidine(32) 2-sulfurtransferase (305 aa).

The tract at residues 1–20 is disordered; it reads MTAVLPLPQPLADPAPRDPR. A PP-loop motif motif is present at residues 59–64; sequence SGGKDS. [4Fe-4S] cluster contacts are provided by C134, C137, and C225. Residues 282-293 show a composition bias toward low complexity; that stretch reads DAPSDVDPDPSA. The interval 282 to 305 is disordered; that stretch reads DAPSDVDPDPSAWLSASHAPHDSD.

It belongs to the TtcA family. In terms of assembly, homodimer. The cofactor is Mg(2+). It depends on [4Fe-4S] cluster as a cofactor.

The protein resides in the cytoplasm. The enzyme catalyses cytidine(32) in tRNA + S-sulfanyl-L-cysteinyl-[cysteine desulfurase] + AH2 + ATP = 2-thiocytidine(32) in tRNA + L-cysteinyl-[cysteine desulfurase] + A + AMP + diphosphate + H(+). It participates in tRNA modification. Catalyzes the ATP-dependent 2-thiolation of cytidine in position 32 of tRNA, to form 2-thiocytidine (s(2)C32). The sulfur atoms are provided by the cysteine/cysteine desulfurase (IscS) system. The protein is tRNA-cytidine(32) 2-sulfurtransferase of Xanthomonas euvesicatoria pv. vesicatoria (strain 85-10) (Xanthomonas campestris pv. vesicatoria).